The chain runs to 253 residues: uncharacterized protein (253 aa).

Positions 1 to 19 (MHYLKKVTIYISLLILVSG) are cleaved as a signal peptide. Residue Cys-20 is the site of N-palmitoyl cysteine attachment. Residue Cys-20 is the site of S-diacylglycerol cysteine attachment.

This sequence belongs to the staphylococcal tandem lipoprotein family.

It localises to the cell membrane. This is an uncharacterized protein from Staphylococcus epidermidis (strain ATCC 35984 / DSM 28319 / BCRC 17069 / CCUG 31568 / BM 3577 / RP62A).